The chain runs to 370 residues: MNSGEISIVFSGGGTGGHIYPAVAVADYLKKRYNNLNIVFIGTNEGLESKIVPQHGYKIEYIQAKGLKRSLTVKNVEVFLKFISGYRQALQILKRIKPKVVFVTGGYVSLPVALAARRLKIKTILHEQNAYPGLANKIISRFCEKILISFEESKRFFKNSNKVVLTGNPVRLEIFSHNERAAKSSLGLEDKIIVLAVGGSRGAENLNKAVIRLSKEFEGCKDVYFILSSGDTKYLEAVNFANSLGVKSNIKILPYISDMPRYLAAADIVISRAGAIAISEITALGKPSIIVPSPYVANNHQEYNAKALEKVGACFVVLESELESDKLKSFLEKLIYDKALYERMSESSKKMGKPEATQNIGKIFEEYLSL.

Residues 15 to 17 (TGG), N129, R171, S200, I256, and Q301 contribute to the UDP-N-acetyl-alpha-D-glucosamine site.

It belongs to the glycosyltransferase 28 family. MurG subfamily.

It localises to the cell membrane. It catalyses the reaction di-trans,octa-cis-undecaprenyl diphospho-N-acetyl-alpha-D-muramoyl-L-alanyl-D-glutamyl-meso-2,6-diaminopimeloyl-D-alanyl-D-alanine + UDP-N-acetyl-alpha-D-glucosamine = di-trans,octa-cis-undecaprenyl diphospho-[N-acetyl-alpha-D-glucosaminyl-(1-&gt;4)]-N-acetyl-alpha-D-muramoyl-L-alanyl-D-glutamyl-meso-2,6-diaminopimeloyl-D-alanyl-D-alanine + UDP + H(+). The protein operates within cell wall biogenesis; peptidoglycan biosynthesis. In terms of biological role, cell wall formation. Catalyzes the transfer of a GlcNAc subunit on undecaprenyl-pyrophosphoryl-MurNAc-pentapeptide (lipid intermediate I) to form undecaprenyl-pyrophosphoryl-MurNAc-(pentapeptide)GlcNAc (lipid intermediate II). The chain is UDP-N-acetylglucosamine--N-acetylmuramyl-(pentapeptide) pyrophosphoryl-undecaprenol N-acetylglucosamine transferase from Caldicellulosiruptor saccharolyticus (strain ATCC 43494 / DSM 8903 / Tp8T 6331).